We begin with the raw amino-acid sequence, 810 residues long: RING finger protein unkempt homolog (810 aa).

The disordered stretch occupies residues 1–24; sequence MSKGPGPGGSAASSAPPAATAQVL. Positions 10-19 are enriched in low complexity; the sequence is SAASSAPPAA. C3H1-type zinc fingers lie at residues 84–113, 124–154, 215–241, 251–285, and 293–321; these read YSPD…HRTT, YYKT…HGPH, NYKT…HNSK, KYRS…HTRT, and IYKS…HVEQ. The tract at residues 239 to 265 is disordered; it reads NSKDRRRSPRKHKYRSSPCPNVKHGDE. S240 carries the phosphoserine modification. Residues 241 to 253 are compositionally biased toward basic residues; sequence KDRRRSPRKHKYR. Residues 324–343 are disordered; it reads LSDDLQPSSTVSSPTQPGPV. Low complexity predominate over residues 329 to 343; sequence QPSSTVSSPTQPGPV. Residues S374, S378, and S385 each carry the phosphoserine modification. Low complexity predominate over residues 569–585; it reads SASFHSASPSPPVSLSS. The interval 569–602 is disordered; that stretch reads SASFHSASPSPPVSLSSHFLQQPQGHLSQSENTF. Positions 586–602 are enriched in polar residues; the sequence is HFLQQPQGHLSQSENTF. S631 is modified (phosphoserine). The stretch at 643-723 forms a coiled coil; sequence GAAELARLRQ…QEELERLHSG (81 aa). An RING-type; degenerate zinc finger spans residues 766-801; the sequence is SVKCLKCQEQNRAVLPCQHAVLCELCAEGSECPVCQ.

It belongs to the unkempt family.

It localises to the cytoplasm. In terms of biological role, sequence-specific RNA-binding protein which plays an important role in the establishment and maintenance of the early morphology of cortical neurons during embryonic development. Acts as a translation repressor and controls a translationally regulated cell morphology program to ensure proper structuring of the nervous system. Translational control depends on recognition of its binding element within target mRNAs which consists of a mandatory UAG trimer upstream of a U/A-rich motif. Associated with polysomes. This chain is RING finger protein unkempt homolog (UNK), found in Canis lupus familiaris (Dog).